The sequence spans 419 residues: Carboxypeptidase A2 (419 aa).

A signal peptide spans 1–18; sequence MAMRLILFFGALFGHIYC. Residues 19–114 constitute a propeptide, activation peptide; the sequence is LETFVGDQVL…EMLFNRRRER (96 aa). Residues 122–414 form the Peptidase M14 domain; it reads AYHTLEEISQ…LGLKAIMEHV (293 aa). Histidine 179 and glutamate 182 together coordinate Zn(2+). Substrate-binding positions include 179–182, arginine 237, and 254–255; these read HARE and NR. Cysteines 248 and 271 form a disulfide. Residue histidine 306 coordinates Zn(2+). 307–308 contributes to the substrate binding site; it reads SY. A disulfide bridge connects residues cysteine 320 and cysteine 354. A substrate-binding site is contributed by tyrosine 358. The Proton donor/acceptor role is filled by glutamate 380.

Belongs to the peptidase M14 family. Zn(2+) serves as cofactor.

The protein localises to the secreted. The catalysed reaction is Similar to that of carboxypeptidase A (EC 3.4.17.1), but with a preference for bulkier C-terminal residues.. Carboxypeptidase that catalyzes the release of a C-terminal amino acid, with a preference for large aromatic C-terminal residues. The protein is Carboxypeptidase A2 (CPA2) of Homo sapiens (Human).